The primary structure comprises 1111 residues: Cellulose synthase-like protein D4 (1111 aa).

2 disordered regions span residues 1-26 (MAST…KFAR) and 175-202 (DYSS…MMKR). Residues 192 to 202 (GNNNNMSMMKR) are compositionally biased toward polar residues. The next 2 membrane-spanning stretches (helical) occupy residues 266 to 286 (AIIS…CFFL) and 297 to 317 (AIWL…SWIL). Residues Asp397 and Asp809 contribute to the active site. 6 consecutive transmembrane segments (helical) span residues 891 to 911 (LFLI…QFIV), 914 to 934 (LSIS…GLAV), 963 to 983 (LYAV…SFTL), 1007 to 1027 (LMIP…VAFI), 1040 to 1060 (LIGG…FAKG), and 1070 to 1090 (TIVF…WTAI).

This sequence belongs to the glycosyltransferase 2 family. Plant cellulose synthase-like D subfamily.

It localises to the golgi apparatus membrane. Functionally, thought to be a Golgi-localized beta-glycan synthase that polymerize the backbones of noncellulosic polysaccharides (hemicelluloses) of plant cell wall. The sequence is that of Cellulose synthase-like protein D4 (CSLD4) from Arabidopsis thaliana (Mouse-ear cress).